Reading from the N-terminus, the 78-residue chain is Large ribosomal subunit protein bL28 (78 aa).

Belongs to the bacterial ribosomal protein bL28 family.

This is Large ribosomal subunit protein bL28 from Prochlorococcus marinus (strain MIT 9211).